Consider the following 63-residue polypeptide: uncharacterized protein (63 aa).

A helical transmembrane segment spans residues 20–40; it reads IVLLISFIFFFGRFIYSSVGA.

The protein localises to the membrane. This is an uncharacterized protein from Escherichia coli O157:H7.